Here is a 213-residue protein sequence, read N- to C-terminus: Peroxisomal protein 2 (213 aa).

A Peroxisomal target signal 1 (PTS1) motif is present at residues 211-213 (ETL).

It belongs to the PXP2 family.

The protein resides in the peroxisome matrix. The protein localises to the cytoplasm. It localises to the cytosol. It is found in the nucleus. In terms of biological role, probably involved in peroxisome formation or maintenance as well as in amino acid metabolism. The polypeptide is Peroxisomal protein 2 (Schizosaccharomyces pombe (strain 972 / ATCC 24843) (Fission yeast)).